The chain runs to 176 residues: Ribosome maturation factor RimM (176 aa).

Positions glutamate 93 to isoleucine 166 constitute a PRC barrel domain.

It belongs to the RimM family. As to quaternary structure, binds ribosomal protein uS19.

It is found in the cytoplasm. In terms of biological role, an accessory protein needed during the final step in the assembly of 30S ribosomal subunit, possibly for assembly of the head region. Essential for efficient processing of 16S rRNA. May be needed both before and after RbfA during the maturation of 16S rRNA. It has affinity for free ribosomal 30S subunits but not for 70S ribosomes. The chain is Ribosome maturation factor RimM from Rhodopseudomonas palustris (strain BisB18).